Reading from the N-terminus, the 90-residue chain is UPF0335 protein bsl7135 (90 aa).

This sequence belongs to the UPF0335 family.

The polypeptide is UPF0335 protein bsl7135 (Bradyrhizobium diazoefficiens (strain JCM 10833 / BCRC 13528 / IAM 13628 / NBRC 14792 / USDA 110)).